Here is a 215-residue protein sequence, read N- to C-terminus: Phosphatidylserine decarboxylase proenzyme (215 aa).

The active-site Schiff-base intermediate with substrate; via pyruvic acid is the Ser-184. At Ser-184 the chain carries Pyruvic acid (Ser); by autocatalysis.

The protein belongs to the phosphatidylserine decarboxylase family. PSD-A subfamily. Heterodimer of a large membrane-associated beta subunit and a small pyruvoyl-containing alpha subunit. The cofactor is pyruvate. In terms of processing, is synthesized initially as an inactive proenzyme. Formation of the active enzyme involves a self-maturation process in which the active site pyruvoyl group is generated from an internal serine residue via an autocatalytic post-translational modification. Two non-identical subunits are generated from the proenzyme in this reaction, and the pyruvate is formed at the N-terminus of the alpha chain, which is derived from the carboxyl end of the proenzyme. The post-translation cleavage follows an unusual pathway, termed non-hydrolytic serinolysis, in which the side chain hydroxyl group of the serine supplies its oxygen atom to form the C-terminus of the beta chain, while the remainder of the serine residue undergoes an oxidative deamination to produce ammonia and the pyruvoyl prosthetic group on the alpha chain.

The protein resides in the cell membrane. It catalyses the reaction a 1,2-diacyl-sn-glycero-3-phospho-L-serine + H(+) = a 1,2-diacyl-sn-glycero-3-phosphoethanolamine + CO2. The protein operates within phospholipid metabolism; phosphatidylethanolamine biosynthesis; phosphatidylethanolamine from CDP-diacylglycerol: step 2/2. Its function is as follows. Catalyzes the formation of phosphatidylethanolamine (PtdEtn) from phosphatidylserine (PtdSer). This Aromatoleum aromaticum (strain DSM 19018 / LMG 30748 / EbN1) (Azoarcus sp. (strain EbN1)) protein is Phosphatidylserine decarboxylase proenzyme.